A 217-amino-acid polypeptide reads, in one-letter code: Probable GTP-binding protein EngB (217 aa).

In terms of domain architecture, EngB-type G spans 24–207 (SQPEICFAGR…HELIESWLIP (184 aa)). GTP contacts are provided by residues 32–39 (GRSNAGKS), 59–63 (GRTQH), 81–84 (DLPG), 148–151 (TKCD), and 185–188 (LFSA). The Mg(2+) site is built by Ser39 and Thr61.

This sequence belongs to the TRAFAC class TrmE-Era-EngA-EngB-Septin-like GTPase superfamily. EngB GTPase family. Mg(2+) serves as cofactor.

In terms of biological role, necessary for normal cell division and for the maintenance of normal septation. The protein is Probable GTP-binding protein EngB of Paraburkholderia phytofirmans (strain DSM 17436 / LMG 22146 / PsJN) (Burkholderia phytofirmans).